The primary structure comprises 116 residues: MKFLLSFVVLAVFSASAFAKESPPKIQVYSRNPGEFGKENTLICHVSDFHPPDITIDLLKNGEVIPNAEQTDLAFEKGWKFHLTKSVSFTPTSNDKFTCRVRHLKETKNISWEPDM.

The first 19 residues, Met1 to Ala19, serve as a signal peptide directing secretion. Residues Pro24 to Ser111 form the Ig-like C1-type domain. A disulfide bridge connects residues Cys44 and Cys99.

The protein belongs to the beta-2-microglobulin family. Heterodimer of an alpha chain and a beta chain. Beta-2-microglobulin is the beta-chain of major histocompatibility complex class I molecules.

It is found in the secreted. In terms of biological role, component of the class I major histocompatibility complex (MHC). Involved in the presentation of peptide antigens to the immune system. The sequence is that of Beta-2-microglobulin (b2m) from Ictalurus punctatus (Channel catfish).